Here is a 281-residue protein sequence, read N- to C-terminus: Diaminopimelate epimerase (281 aa).

Residues Asn13, Gln46, and Asn66 each contribute to the substrate site. Cys75 acts as the Proton donor in catalysis. Residues 76–77 (GN), Asn160, Asn193, and 211–212 (ER) contribute to the substrate site. Catalysis depends on Cys220, which acts as the Proton acceptor. Position 221-222 (221-222 (GT)) interacts with substrate.

It belongs to the diaminopimelate epimerase family. Homodimer.

It localises to the cytoplasm. It carries out the reaction (2S,6S)-2,6-diaminopimelate = meso-2,6-diaminopimelate. Its pathway is amino-acid biosynthesis; L-lysine biosynthesis via DAP pathway; DL-2,6-diaminopimelate from LL-2,6-diaminopimelate: step 1/1. In terms of biological role, catalyzes the stereoinversion of LL-2,6-diaminopimelate (L,L-DAP) to meso-diaminopimelate (meso-DAP), a precursor of L-lysine and an essential component of the bacterial peptidoglycan. This chain is Diaminopimelate epimerase, found in Acinetobacter baylyi (strain ATCC 33305 / BD413 / ADP1).